We begin with the raw amino-acid sequence, 486 residues long: Iron-sulfur cluster assembly SufBD family protein ycf24 (486 aa).

It belongs to the iron-sulfur cluster assembly SufBD family.

The protein localises to the plastid. It localises to the chloroplast. The protein is Iron-sulfur cluster assembly SufBD family protein ycf24 (ycf24) of Trieres chinensis (Marine centric diatom).